Reading from the N-terminus, the 365-residue chain is Protein RecA (365 aa).

Position 81 to 88 (81 to 88) interacts with ATP; it reads GPESSGKT.

It belongs to the RecA family.

It localises to the cytoplasm. In terms of biological role, can catalyze the hydrolysis of ATP in the presence of single-stranded DNA, the ATP-dependent uptake of single-stranded DNA by duplex DNA, and the ATP-dependent hybridization of homologous single-stranded DNAs. It interacts with LexA causing its activation and leading to its autocatalytic cleavage. This is Protein RecA from Borreliella afzelii (strain PKo) (Borrelia afzelii).